Here is a 306-residue protein sequence, read N- to C-terminus: Ectoine dioxygenase (306 aa).

Gln127 is an L-ectoine binding site. Lys133 contributes to the 2-oxoglutarate binding site. His144, Asp146, and His245 together coordinate Fe cation.

Belongs to the PhyH family. EctD subfamily. Homodimer. Fe(2+) serves as cofactor.

It carries out the reaction L-ectoine + 2-oxoglutarate + O2 = 5-hydroxyectoine + succinate + CO2. Involved in the biosynthesis of 5-hydroxyectoine, called compatible solute, which helps organisms to survive extreme osmotic stress by acting as a highly soluble organic osmolyte. Catalyzes the 2-oxoglutarate-dependent selective hydroxylation of L-ectoine to yield (4S,5S)-5-hydroxyectoine. The sequence is that of Ectoine dioxygenase from Sphingopyxis alaskensis (strain DSM 13593 / LMG 18877 / RB2256) (Sphingomonas alaskensis).